We begin with the raw amino-acid sequence, 374 residues long: DNA replication and repair protein RecF (374 aa).

34-41 (GNNGSGKT) is an ATP binding site.

Belongs to the RecF family.

The protein localises to the cytoplasm. Its function is as follows. The RecF protein is involved in DNA metabolism; it is required for DNA replication and normal SOS inducibility. RecF binds preferentially to single-stranded, linear DNA. It also seems to bind ATP. The sequence is that of DNA replication and repair protein RecF from Allorhizobium ampelinum (strain ATCC BAA-846 / DSM 112012 / S4) (Agrobacterium vitis (strain S4)).